Here is a 382-residue protein sequence, read N- to C-terminus: Galactokinase (382 aa).

A substrate-binding site is contributed by 34–37; that stretch reads EHTD. Position 124–130 (124–130) interacts with ATP; the sequence is GAGLSSS. Residues Ser130 and Glu162 each contribute to the Mg(2+) site. The active-site Proton acceptor is the Asp174. Tyr223 serves as a coordination point for substrate.

This sequence belongs to the GHMP kinase family. GalK subfamily.

Its subcellular location is the cytoplasm. The enzyme catalyses alpha-D-galactose + ATP = alpha-D-galactose 1-phosphate + ADP + H(+). It participates in carbohydrate metabolism; galactose metabolism. Catalyzes the transfer of the gamma-phosphate of ATP to D-galactose to form alpha-D-galactose-1-phosphate (Gal-1-P). The polypeptide is Galactokinase (Salmonella newport (strain SL254)).